The chain runs to 65 residues: Small ribosomal subunit protein bS21A (65 aa).

This sequence belongs to the bacterial ribosomal protein bS21 family.

In Francisella tularensis subsp. holarctica (strain LVS), this protein is Small ribosomal subunit protein bS21A.